A 159-amino-acid chain; its full sequence is Ubiquitin-like protein ATG12 (159 aa).

The interval methionine 1 to asparagine 40 is disordered. The segment covering asparagine 13–proline 27 has biased composition (low complexity). Residue glycine 159 forms a Glycyl lysine isopeptide (Gly-Lys) (interchain with K-218 in ATG5) linkage.

Belongs to the ATG12 family. In terms of assembly, forms a conjugate with ATG5. Forms a thioester bond with the 'Cys-116' of ATG10. Interacts with the ATG7 C-terminal 40 amino acids domain. The ATG12-ATG5 conjugate forms a complex with several units of ATG16. The ATG12-ATG5 conjugate also associates with ATG3.

The protein resides in the preautophagosomal structure membrane. It localises to the cytoplasm. Functionally, ubiquitin-like protein involved in cytoplasm to vacuole transport (Cvt), autophagy vesicles formation, mitophagy, and nucleophagy. Conjugation with ATG5 through a ubiquitin-like conjugating system involving also ATG7 as an E1-like activating enzyme and ATG10 as an E2-like conjugating enzyme, is essential for its function. The ATG12-ATG5 conjugate acts as an E3-like enzyme which is required for lipidation of ATG8 and ATG8 association to the vesicle membranes. ATG12-ATG5 rearranges the ATG3 catalytic center and enhances its E2 activity. Plays a role in sexual development and perithecia formation. This is Ubiquitin-like protein ATG12 from Sordaria macrospora (strain ATCC MYA-333 / DSM 997 / K(L3346) / K-hell).